The sequence spans 301 residues: Probable aspartoacylase (301 aa).

Residues H13 and E16 each coordinate Zn(2+). Substrate contacts are provided by residues R54 and 61–62 (NR). Zn(2+) is bound at residue H105. Substrate contacts are provided by E163 and Y273.

Belongs to the AspA/AstE family. Aspartoacylase subfamily. Zn(2+) serves as cofactor.

It carries out the reaction an N-acyl-L-aspartate + H2O = a carboxylate + L-aspartate. In Prochlorococcus marinus (strain MIT 9301), this protein is Probable aspartoacylase.